Consider the following 470-residue polypeptide: Diaminobutyrate--2-oxoglutarate aminotransferase (470 aa).

Lys-304 carries the N6-(pyridoxal phosphate)lysine modification.

The protein belongs to the class-III pyridoxal-phosphate-dependent aminotransferase family. The cofactor is pyridoxal 5'-phosphate.

It carries out the reaction L-2,4-diaminobutanoate + 2-oxoglutarate = L-aspartate 4-semialdehyde + L-glutamate. It functions in the pathway siderophore biosynthesis; rhizobactin biosynthesis. This is Diaminobutyrate--2-oxoglutarate aminotransferase (rhbA) from Rhizobium meliloti (strain 1021) (Ensifer meliloti).